The following is a 159-amino-acid chain: UPF0336 protein ML1910 (159 aa).

It belongs to the UPF0336 family.

In Mycobacterium leprae (strain TN), this protein is UPF0336 protein ML1910.